Consider the following 192-residue polypeptide: Transcription termination/antitermination protein NusG (192 aa).

Residues 140–168 (VGEVVTVTDGPFETFMGTVEEIDKERNRL) form the KOW domain.

It belongs to the NusG family.

Its function is as follows. Participates in transcription elongation, termination and antitermination. This chain is Transcription termination/antitermination protein NusG, found in Rickettsia typhi (strain ATCC VR-144 / Wilmington).